The following is a 103-amino-acid chain: Large ribosomal subunit protein uL24 (103 aa).

Belongs to the universal ribosomal protein uL24 family. Part of the 50S ribosomal subunit.

Its function is as follows. One of two assembly initiator proteins, it binds directly to the 5'-end of the 23S rRNA, where it nucleates assembly of the 50S subunit. One of the proteins that surrounds the polypeptide exit tunnel on the outside of the subunit. The chain is Large ribosomal subunit protein uL24 from Corynebacterium urealyticum (strain ATCC 43042 / DSM 7109).